The sequence spans 274 residues: 4-deoxy-L-threo-5-hexosulose-uronate ketol-isomerase (274 aa).

Residues histidine 192, histidine 194, glutamate 199, and histidine 241 each coordinate Zn(2+).

This sequence belongs to the KduI family. It depends on Zn(2+) as a cofactor.

It catalyses the reaction 5-dehydro-4-deoxy-D-glucuronate = 3-deoxy-D-glycero-2,5-hexodiulosonate. It participates in glycan metabolism; pectin degradation; 2-dehydro-3-deoxy-D-gluconate from pectin: step 4/5. Its function is as follows. Catalyzes the isomerization of 5-dehydro-4-deoxy-D-glucuronate to 3-deoxy-D-glycero-2,5-hexodiulosonate. The protein is 4-deoxy-L-threo-5-hexosulose-uronate ketol-isomerase of Agrobacterium fabrum (strain C58 / ATCC 33970) (Agrobacterium tumefaciens (strain C58)).